A 49-amino-acid chain; its full sequence is uncharacterized protein (49 aa).

This sequence belongs to the metallo-dependent hydrolases superfamily. TatD-type hydrolase family. A divalent metal cation is required as a cofactor.

This is an uncharacterized protein from Geobacillus stearothermophilus (Bacillus stearothermophilus).